Consider the following 1206-residue polypeptide: Pre-mRNA-splicing factor prp12 (1206 aa).

Belongs to the RSE1 family. Belongs to the 40S cdc5-associated complex (or cwf complex), a spliceosome sub-complex reminiscent of a late-stage spliceosome composed of the U2, U5 and U6 snRNAs and at least brr2, cdc5, cwf2/prp3, cwf3/syf1, cwf4/syf3, cwf5/ecm2, spp42/cwf6, cwf7/spf27, cwf8, cwf9, cwf10, cwf11, cwf12, prp45/cwf13, cwf14, cwf15, cwf16, cwf17, cwf18, cwf19, cwf20, cwf21, cwf22, cwf23, cwf24, cwf25, cwf26, cyp7/cwf27, cwf28, cwf29/ist3, lea1, msl1, prp5/cwf1, prp10, prp12/sap130, prp17, prp22, sap61, sap62, sap114, sap145, slu7, smb1, smd1, smd3, smf1, smg1 and syf2.

The protein resides in the nucleus. In terms of biological role, involved in mRNA splicing and G2/M transition. This is Pre-mRNA-splicing factor prp12 (prp12) from Schizosaccharomyces pombe (strain 972 / ATCC 24843) (Fission yeast).